The primary structure comprises 299 residues: MLSSKLLDINYWNKFGKRLINELINLIEQIPKGYVTTFKELAKALGDPIATKFVAMYYKKAPHWYRVVSSNLIVSPMQKALLEKEVKIIGNKVYAPIFKDFKSSKPLLELQKIQEYLVNKIKFDYPEYDYVIGIDIGYKNNIIALAIFDKNKKLIETKTCKHNIEFPYIPTYLSFREGIPIVNILKDLDYTALYIINGHGLSHPRKMGLATFVGTVLDLPTIGDAKKLLYGKIKNNIIYAHNMPVGYFVGHYVTIGNRTNLEFLKEFIKEWNSKKYLLPIEVADKITKCGRGDSNPGRD.

Residues 1 to 80 (MLSSKLLDIN…NLIVSPMQKA (80 aa)) are probable methylated-DNA--protein-cysteine methyltransferase-like. The tract at residues 81-299 (LLEKEVKIIG…GRGDSNPGRD (219 aa)) is endonuclease V. Positions 135 and 197 each coordinate Mg(2+).

This sequence in the N-terminal section; belongs to the MGMT family. It in the C-terminal section; belongs to the endonuclease V family. Mg(2+) serves as cofactor.

The protein resides in the cytoplasm. It carries out the reaction Endonucleolytic cleavage at apurinic or apyrimidinic sites to products with a 5'-phosphate.. Functionally, DNA repair enzyme involved in the repair of deaminated bases. Selectively cleaves double-stranded DNA at the second phosphodiester bond 3' to a deoxyinosine leaving behind the intact lesion on the nicked DNA. This is Bifunctional methyltransferase-like/endonuclease from Nanoarchaeum equitans (strain Kin4-M).